Reading from the N-terminus, the 278-residue chain is MDRFLVKGAVGSLKRRMEQEQTGGGPAGLAEEEGNSKKNPRRAAPGNGVDSAGLTWGRIRAEGLNCDYTILFGKAEADEIFQELEKEVEYFTGALARVQVFGKWHSVPRKQATYGDTGLTYTFSGLTLSPKPWIPVLERVRDRVSLVTGQTFNFVLINRYKDGQDHIGEHRDDERELALGSPIASVSFGACRDFVFRHKDSRGKHPSRRLEVVRLQLAHGSLLMMNHPTNTHWYHSLPVRKKVLAPRVNLTFRKILPTTKRTTLLTASASVGSFALHS.

Positions 1–49 (MDRFLVKGAVGSLKRRMEQEQTGGGPAGLAEEEGNSKKNPRRAAPGNGV) are disordered. A PCNA-binding motif is present at residues 3–7 (RFLVK). Residues 101–103 (FGK) and 121–123 (YTF) contribute to the substrate site. The Fe2OG dioxygenase domain maps to 151–256 (TFNFVLINRY…RVNLTFRKIL (106 aa)). The 2-oxoglutarate site is built by Asn-158, Tyr-160, and His-170. Residues His-170 and Asp-172 each coordinate Fe cation. Asp-173 lines the substrate pocket. 2-oxoglutarate contacts are provided by His-235, Arg-247, Thr-251, and Arg-253. His-235 lines the Fe cation pocket.

The protein belongs to the alkB family. As to quaternary structure, interacts with PCNA homotrimer; this interaction is enhanced during the S-phase of the cell cycle. Interacts with nucleolar proteins NCL, UBTF and NPM1. Interacts with XRCC5-XRCC6 heterodimer. The cofactor is Fe(2+).

Its subcellular location is the nucleus. The protein localises to the nucleolus. The protein resides in the nucleoplasm. The enzyme catalyses a methylated nucleobase within DNA + 2-oxoglutarate + O2 = a nucleobase within DNA + formaldehyde + succinate + CO2. It catalyses the reaction an N(1)-methyl-2'-deoxyadenosine in double-stranded DNA + 2-oxoglutarate + O2 = a 2'-deoxyadenosine in double-stranded DNA + formaldehyde + succinate + CO2 + H(+). The catalysed reaction is an N(1)-methyl-2'-deoxyadenosine in single-stranded DNA + 2-oxoglutarate + O2 = a 2'-deoxyadenosine in single-stranded DNA + formaldehyde + succinate + CO2 + H(+). It carries out the reaction an N(3)-methyl-2'-deoxycytidine in double-stranded DNA + 2-oxoglutarate + O2 = a 2'-deoxycytidine in double-stranded DNA + formaldehyde + succinate + CO2 + H(+). The enzyme catalyses an N(3)-methyl-2'-deoxycytidine in single-stranded DNA + 2-oxoglutarate + O2 = a 2'-deoxycytidine in single-stranded DNA + formaldehyde + succinate + CO2 + H(+). It catalyses the reaction a 1,N(6)-etheno-2'-deoxyadenosine in double-stranded DNA + 2-oxoglutarate + O2 + H2O = a 2'-deoxyadenosine in double-stranded DNA + glyoxal + succinate + CO2. The catalysed reaction is a 1,N(6)-etheno-2'-deoxyadenosine in single-stranded DNA + 2-oxoglutarate + O2 + H2O = a 2'-deoxyadenosine in single-stranded DNA + glyoxal + succinate + CO2. It carries out the reaction a 3,N(4)-etheno-2'-deoxycytidine in double-stranded DNA + 2-oxoglutarate + O2 + H2O = a 2'-deoxycytidine in double-stranded DNA + glyoxal + succinate + CO2. The enzyme catalyses a 3,N(4)-etheno-2'-deoxycytidine in single-stranded DNA + 2-oxoglutarate + O2 + H2O = a 2'-deoxycytidine in single-stranded DNA + glyoxal + succinate + CO2. It catalyses the reaction a 1,N(2)-etheno-2'-deoxyguanosine in double-stranded DNA + 2-oxoglutarate + O2 + H2O = a 2'-deoxyguanosine in double-stranded DNA + glyoxal + succinate + CO2. Its activity is regulated as follows. Activated by ascorbate and magnesium ions. Functionally, dioxygenase that repairs alkylated nucleic acid bases by direct reversal oxidative dealkylation. Can process both double-stranded (ds) and single-stranded (ss) DNA substrates, with a strong preference for dsDNA. Uses molecular oxygen, 2-oxoglutarate and iron as cofactors to oxidize the alkyl groups that are subsequently released as aldehydes, regenerating the undamaged bases. Probes the base pair stability, locates a weakened base pair and flips the damaged base to accommodate the lesion in its active site for efficient catalysis. Repairs monoalkylated bases, specifically N1-methyladenine and N3-methylcytosine, as well as higher order alkyl adducts such as bases modified with exocyclic bridged adducts known as etheno adducts including 1,N6-ethenoadenine, 3,N4-ethenocytosine and 1,N2-ethenoguanine. Acts as a gatekeeper of genomic integrity under alkylation stress. Efficiently repairs alkylated lesions in ribosomal DNA (rDNA). These lesions can cause ss- and dsDNA strand breaks that severely impair rDNA transcription. In a response mechanism to DNA damage, associates with PCNA at replication forks to repair alkylated adducts prior to replication. This Bos taurus (Bovine) protein is DNA oxidative demethylase ALKBH2 (ALKBH2).